The chain runs to 221 residues: PKHD-type hydroxylase P9211_12561 (221 aa).

Residues Lys-80–Ser-174 enclose the Fe2OG dioxygenase domain. His-98, Asp-100, and His-155 together coordinate Fe cation. Arg-165 serves as a coordination point for 2-oxoglutarate.

The cofactor is Fe(2+). It depends on L-ascorbate as a cofactor.

The polypeptide is PKHD-type hydroxylase P9211_12561 (Prochlorococcus marinus (strain MIT 9211)).